A 154-amino-acid chain; its full sequence is Interleukin-2 (154 aa).

The signal sequence occupies residues 1–20 (MYRMQLLSCIALSLALVTNS). Threonine 23 carries O-linked (GalNAc...) threonine glycosylation. Residues cysteine 78 and cysteine 126 are joined by a disulfide bond.

The protein belongs to the IL-2 family.

The protein resides in the secreted. Functionally, cytokine produced by activated CD4-positive helper T-cells and to a lesser extend activated CD8-positive T-cells and natural killer (NK) cells that plays pivotal roles in the immune response and tolerance. Binds to a receptor complex composed of either the high-affinity trimeric IL-2R (IL2RA/CD25, IL2RB/CD122 and IL2RG/CD132) or the low-affinity dimeric IL-2R (IL2RB and IL2RG). Interaction with the receptor leads to oligomerization and conformation changes in the IL-2R subunits resulting in downstream signaling starting with phosphorylation of JAK1 and JAK3. In turn, JAK1 and JAK3 phosphorylate the receptor to form a docking site leading to the phosphorylation of several substrates including STAT5. This process leads to activation of several pathways including STAT, phosphoinositide-3-kinase/PI3K and mitogen-activated protein kinase/MAPK pathways. Functions as a T-cell growth factor and can increase NK-cell cytolytic activity as well. Promotes strong proliferation of activated B-cells and subsequently immunoglobulin production. Plays a pivotal role in regulating the adaptive immune system by controlling the survival and proliferation of regulatory T-cells, which are required for the maintenance of immune tolerance. Moreover, participates in the differentiation and homeostasis of effector T-cell subsets, including Th1, Th2, Th17 as well as memory CD8-positive T-cells. This chain is Interleukin-2 (IL2), found in Cercocebus atys (Sooty mangabey).